The following is a 227-amino-acid chain: Terpene cyclase ltmB (227 aa).

The next 7 helical transmembrane spans lie at L20 to I40, M51 to P71, V76 to A96, A113 to M133, I135 to G155, L173 to W195, and L206 to L226.

Belongs to the paxB family.

The protein resides in the membrane. The protein operates within secondary metabolite biosynthesis. Functionally, terpene cyclase; part of the gene cluster that mediates the biosynthesis of lolitrems, indole-diterpene mycotoxins that are potent tremorgens in mammals, and are synthesized by clavicipitaceous fungal endophytes in association with their grass hosts. The geranylgeranyl diphosphate (GGPP) synthase ltmG is proposed to catalyze the first step in lolitrem biosynthesis. LtmG catalyzes a series of iterative condensations of isopentenyl diphosphate (IPP) with dimethylallyl diphosphate (DMAPP), geranyl diphosphate (GPP), and farnesyl diphosphate (FPP), to form GGPP. GGPP then condenses with indole-3-glycerol phosphate to form 3-geranylgeranylindole, an acyclic intermediate, to be incorporated into paxilline. Either ltmG or ltmC could be responsible for this step, as both are putative prenyl transferases. The FAD-dependent monooxygenase ltmM then catalyzes the epoxidation of the two terminal alkenes of the geranylgeranyl moiety, which is subsequently cyclized by ltmB, to paspaline. The cytochrome P450 monooxygenases ltmQ and ltmP can sequentially oxidize paspaline to terpendole E and terpendole F. Alternatively, ltmP converts paspaline to an intermediate which is oxidized by ltmQ to terpendole F. LtmF, ltmK, ltmE and ltmJ appear to be unique to the epichloe endophytes. The prenyltransferase ltmF is involved in the 27-hydroxyl-O-prenylation. The cytochrome P450 monooxygenase ltmK is required for the oxidative acetal ring formation. The multi-functional prenyltransferase ltmE is required for C20- and C21-prenylations of the indole ring of paspalanes and acts together with the cytochrome P450 monooxygenase ltmJ to yield lolitremanes by multiple oxidations and ring closures. The stereoisomer pairs of lolitriol and lolitrem N or lolitrem B and lolitrem F may be attributed to variations in the way in which ring closure can occur under the action of ltmJ. While the major product of this pathway is lolitrem B, the prenyl transferases and cytochrome P450 monooxygenases identified in this pathway have a remarkable versatility in their regio- and stereo-specificities to generate a diverse range of metabolites that are products of a metabolic grid rather than a linear pathway. In Epichloe festucae var. lolii (Neotyphodium lolii), this protein is Terpene cyclase ltmB.